We begin with the raw amino-acid sequence, 284 residues long: MSSAQLLTAQQLAARLSEPDLLVLDCRFALEDPSYGARVYQENHIPGAHFADLERDLSAPVRKGVTGRHPLPDPAELALKLQAWGLRQDSQVVLYDDGPGAFAARAWWLLHWLGKRDGVYLLDGGLAAWKAAGLALTNGESSLRPGDFQGQPDASLLIDAATLQAQLGQPGLALLDARAQPRFRGEVEPIDPVAGHIPGAQCAAFTDNLGSDGRFLPPEQLHQRFSALLRGRPVDELVAYCGSGVTACHNLFALSLAGFPLPRLYAGSWSEWITDPRRPVATGD.

2 Rhodanese domains span residues 17-138 (SEPD…ALTN) and 168-281 (GQPG…RPVA). Arg182 lines the substrate pocket. The active-site Cysteine persulfide intermediate is the Cys241. The tract at residues 241-247 (CGSGVTA) is substrate specificity.

The protein resides in the cytoplasm. The enzyme catalyses 2-oxo-3-sulfanylpropanoate + [thioredoxin]-dithiol = [thioredoxin]-disulfide + hydrogen sulfide + pyruvate + H(+). Its function is as follows. Catalyzes the transfer of sulfur from 3-mercaptopyruvate to a thiol-containing acceptor to form an intramolecular disulfide releasing hydrogen sulfide and pyruvate. The chain is Probable 3-mercaptopyruvate sulfurtransferase (sseA) from Pseudomonas aeruginosa (strain ATCC 15692 / DSM 22644 / CIP 104116 / JCM 14847 / LMG 12228 / 1C / PRS 101 / PAO1).